The chain runs to 295 residues: Polyprenyl transferase dpmaC (295 aa).

Transmembrane regions (helical) follow at residues 39–59 (LFCVLAAYLFCGAGMVWNDWI), 84–104 (QAFVWMALQVIASCAVLHVML), 109–124 (VHVIPVMIASMLYPFL), 131–151 (KLHIYPQYMLAFTIAWPAIPG), 168–188 (YCLPLCTVVFFWTIYLNTAYS), 213–233 (LVLVALVCPILACLPLYLTQF), 237–257 (WLWVTWMGVWTAAFAVQLALF), and 271–291 (SNFVLGIWTIVVCSVELLLKA).

Belongs to the UbiA prenyltransferase family. It depends on Mg(2+) as a cofactor.

The protein resides in the membrane. It functions in the pathway secondary metabolite biosynthesis; terpenoid biosynthesis. Functionally, polyprenyl transferase; part of the gene cluster that mediates the biosynthesis of the diterpenoid pyrones subglutinols A and B. The first step of the pathway is the synthesis of the alpha-pyrone moiety by the polyketide synthase dpmaA via condensation of one acetyl-CoA starter unit with 3 malonyl-CoA units and 2 methylations. The alpha-pyrone is then combined with geranylgeranyl pyrophosphate (GGPP) formed by the GGPP synthase dpmaD through the action of the prenyltransferase dpmaC to yield a linear alpha-pyrone diterpenoid. Subsequent steps in the diterpenoid pyrone biosynthetic pathway involve the decalin core formation, which is initiated by the epoxidation of the C10-C11 olefin by the FAD-dependent oxidoreductase dpmaE, and is followed by a cyclization cascade catalyzed by the terpene cyclase dpmaB. The dehydrogenase dpmaF is then involved in tetrahydrofuran (THF) ring formation at the C5 unit to complete the formation of subglutinols A and B. The sequence is that of Polyprenyl transferase dpmaC from Metarhizium anisopliae (Entomophthora anisopliae).